The primary structure comprises 892 residues: Translation initiation factor IF-2 (892 aa).

Residues 88 to 305 form a disordered region; the sequence is KKRTFVKRDP…SLQQGFQKPA (218 aa). Basic and acidic residues-rich tracts occupy residues 93–159 and 166–216; these read VKRD…KDKV and DMTK…EENK. Positions 254–269 are enriched in basic residues; that stretch reads GRGRNAKAARPAKKGK. The span at 270–282 shows a compositional bias: basic and acidic residues; that stretch reads HAESKADREEARA. Residues 391–560 enclose the tr-type G domain; it reads PRAPVVTIMG…LLQAEVLELK (170 aa). The interval 400–407 is G1; sequence GHVDHGKT. 400 to 407 provides a ligand contact to GTP; the sequence is GHVDHGKT. The G2 stretch occupies residues 425 to 429; the sequence is GITQH. The interval 446–449 is G3; sequence DTPG. GTP is bound by residues 446–450 and 500–503; these read DTPGH and NKID. Residues 500 to 503 form a G4 region; it reads NKID. The tract at residues 536–538 is G5; that stretch reads SAK.

This sequence belongs to the TRAFAC class translation factor GTPase superfamily. Classic translation factor GTPase family. IF-2 subfamily.

It is found in the cytoplasm. Functionally, one of the essential components for the initiation of protein synthesis. Protects formylmethionyl-tRNA from spontaneous hydrolysis and promotes its binding to the 30S ribosomal subunits. Also involved in the hydrolysis of GTP during the formation of the 70S ribosomal complex. This chain is Translation initiation factor IF-2, found in Salmonella agona (strain SL483).